Here is a 453-residue protein sequence, read N- to C-terminus: Probable exopolygalacturonase B (453 aa).

Residues 1–16 form the signal peptide; it reads MKFFALAALFASTVNS. N-linked (GlcNAc...) asparagine glycans are attached at residues Asn-185 and Asn-225. Residue Asp-255 is the Proton donor of the active site. Cys-257 and Cys-274 are oxidised to a cystine. Asn-263 and Asn-275 each carry an N-linked (GlcNAc...) asparagine glycan. His-278 is an active-site residue. 2 PbH1 repeats span residues 295–316 and 327–348; these read IENV…RLKA and INNV…VLDQ. Residues Asn-302, Asn-329, Asn-354, and Asn-366 are each glycosylated (N-linked (GlcNAc...) asparagine). Residues 362 to 405 form a PbH1 3 repeat; sequence PSRVNFTNIVFEDIYGTSSGKRGKVVADLTCSPNAVCSGIRLKN. Cys-392 and Cys-398 are oxidised to a cystine. A glycan (N-linked (GlcNAc...) asparagine) is linked at Asn-436.

It belongs to the glycosyl hydrolase 28 family.

The protein resides in the secreted. It carries out the reaction [(1-&gt;4)-alpha-D-galacturonosyl](n) + H2O = alpha-D-galacturonate + [(1-&gt;4)-alpha-D-galacturonosyl](n-1). Its function is as follows. Specific in hydrolyzing the terminal glycosidic bond of polygalacturonic acid and oligogalacturonates. The chain is Probable exopolygalacturonase B (pgxB) from Aspergillus fumigatus (strain ATCC MYA-4609 / CBS 101355 / FGSC A1100 / Af293) (Neosartorya fumigata).